Consider the following 516-residue polypeptide: uncharacterized protein (516 aa).

Positions 1–22 (MLYRFWKTGLAIFMPGCILLSS) are cleaved as a signal peptide. Cys-23 carries N-palmitoyl cysteine lipidation. Cys-23 carries S-diacylglycerol cysteine lipidation.

This sequence belongs to the MG067/MG068/MG395 family.

Its subcellular location is the cell membrane. This is an uncharacterized protein from Mycoplasma genitalium (strain ATCC 33530 / DSM 19775 / NCTC 10195 / G37) (Mycoplasmoides genitalium).